A 235-amino-acid chain; its full sequence is Protein GrpE (235 aa).

The span at 1–18 shows a compositional bias: polar residues; the sequence is MTDGNQKPDGNSGEQVTV. 2 disordered regions span residues 1–50 and 198–235; these read MTDG…DAAH and ESVDDGTAVADTAENDQADQGNSADTSGEQAESEPSGS. The span at 19-35 shows a compositional bias: basic and acidic residues; sequence TDKRRIDPETGEVRHVP. The span at 215-235 shows a compositional bias: polar residues; that stretch reads ADQGNSADTSGEQAESEPSGS.

Belongs to the GrpE family. As to quaternary structure, homodimer.

It is found in the cytoplasm. Its function is as follows. Participates actively in the response to hyperosmotic and heat shock by preventing the aggregation of stress-denatured proteins, in association with DnaK and GrpE. It is the nucleotide exchange factor for DnaK and may function as a thermosensor. Unfolded proteins bind initially to DnaJ; upon interaction with the DnaJ-bound protein, DnaK hydrolyzes its bound ATP, resulting in the formation of a stable complex. GrpE releases ADP from DnaK; ATP binding to DnaK triggers the release of the substrate protein, thus completing the reaction cycle. Several rounds of ATP-dependent interactions between DnaJ, DnaK and GrpE are required for fully efficient folding. This chain is Protein GrpE, found in Mycobacterium tuberculosis (strain ATCC 25177 / H37Ra).